A 261-amino-acid polypeptide reads, in one-letter code: Phosphonates import ATP-binding protein PhnC (261 aa).

Positions Leu15 to Arg257 constitute an ABC transporter domain. Position 48 to 55 (Gly48 to Ser55) interacts with ATP.

Belongs to the ABC transporter superfamily. Phosphonates importer (TC 3.A.1.9.1) family. The complex is composed of two ATP-binding proteins (PhnC), two transmembrane proteins (PhnE) and a solute-binding protein (PhnD).

The protein localises to the cell inner membrane. The enzyme catalyses phosphonate(out) + ATP + H2O = phosphonate(in) + ADP + phosphate + H(+). Its function is as follows. Part of the ABC transporter complex PhnCDE involved in phosphonates import. Responsible for energy coupling to the transport system. The polypeptide is Phosphonates import ATP-binding protein PhnC (Hyphomonas neptunium (strain ATCC 15444)).